The primary structure comprises 320 residues: Cytochrome f (320 aa).

The first 35 residues, Met-1–Ala-35, serve as a signal peptide directing secretion. Residues Tyr-36, Cys-56, Cys-59, and His-60 each coordinate heme. The helical transmembrane segment at Val-286–Lys-306 threads the bilayer.

It belongs to the cytochrome f family. As to quaternary structure, the 4 large subunits of the cytochrome b6-f complex are cytochrome b6, subunit IV (17 kDa polypeptide, petD), cytochrome f and the Rieske protein, while the 4 small subunits are PetG, PetL, PetM and PetN. The complex functions as a dimer. Heme serves as cofactor.

The protein localises to the plastid thylakoid membrane. In terms of biological role, component of the cytochrome b6-f complex, which mediates electron transfer between photosystem II (PSII) and photosystem I (PSI), cyclic electron flow around PSI, and state transitions. This chain is Cytochrome f, found in Cuscuta obtusiflora (Peruvian dodder).